The chain runs to 619 residues: Protein CPn_1016/CP_0837/CPj1016/CpB1054 (619 aa).

A disordered region spans residues 591-619 (NAKKSEEQTSPQETPEVIRVSYPTTTSAL).

This sequence belongs to the chlamydial CPn_1016/CT_858/TC_0248 family.

The chain is Protein CPn_1016/CP_0837/CPj1016/CpB1054 from Chlamydia pneumoniae (Chlamydophila pneumoniae).